The primary structure comprises 83 residues: MAHKKGQGASRNGRDSESKRLGLKVGAGQRVSTGSILVRQRGTKWHPAVNVGRGKDDTLFALADGIVVMKKTDRTYVSVIPQA.

The segment at 1-25 is disordered; the sequence is MAHKKGQGASRNGRDSESKRLGLKV.

This sequence belongs to the bacterial ribosomal protein bL27 family.

The protein is Large ribosomal subunit protein bL27 of Chlamydia trachomatis serovar L2 (strain ATCC VR-902B / DSM 19102 / 434/Bu).